The primary structure comprises 121 residues: Large ribosomal subunit protein bL12 (121 aa).

The protein belongs to the bacterial ribosomal protein bL12 family. As to quaternary structure, homodimer. Part of the ribosomal stalk of the 50S ribosomal subunit. Forms a multimeric L10(L12)X complex, where L10 forms an elongated spine to which 2 to 4 L12 dimers bind in a sequential fashion. Binds GTP-bound translation factors.

Its function is as follows. Forms part of the ribosomal stalk which helps the ribosome interact with GTP-bound translation factors. Is thus essential for accurate translation. The protein is Large ribosomal subunit protein bL12 of Halalkalibacterium halodurans (strain ATCC BAA-125 / DSM 18197 / FERM 7344 / JCM 9153 / C-125) (Bacillus halodurans).